Here is a 130-residue protein sequence, read N- to C-terminus: Glycine cleavage system H protein (130 aa).

A Lipoyl-binding domain is found at 22-103 (KAYIGISDCA…PYGSWIAAIE (82 aa)). An N6-lipoyllysine modification is found at Lys63.

This sequence belongs to the GcvH family. The glycine cleavage system is composed of four proteins: P, T, L and H. The cofactor is (R)-lipoate.

In terms of biological role, the glycine cleavage system catalyzes the degradation of glycine. The H protein shuttles the methylamine group of glycine from the P protein to the T protein. The polypeptide is Glycine cleavage system H protein (Clostridium botulinum (strain ATCC 19397 / Type A)).